An 86-amino-acid polypeptide reads, in one-letter code: Small ribosomal subunit protein bS20 (86 aa).

Belongs to the bacterial ribosomal protein bS20 family.

Binds directly to 16S ribosomal RNA. The polypeptide is Small ribosomal subunit protein bS20 (Mycolicibacterium gilvum (strain PYR-GCK) (Mycobacterium gilvum (strain PYR-GCK))).